We begin with the raw amino-acid sequence, 134 residues long: Large ribosomal subunit protein bL19 (134 aa).

The disordered stretch occupies residues 108-134 (KSARIVERSDRSDKAKAQKAAAATAAE). Positions 111 to 123 (RIVERSDRSDKAK) are enriched in basic and acidic residues. A compositionally biased stretch (low complexity) spans 125–134 (QKAAAATAAE).

This sequence belongs to the bacterial ribosomal protein bL19 family.

This protein is located at the 30S-50S ribosomal subunit interface and may play a role in the structure and function of the aminoacyl-tRNA binding site. The polypeptide is Large ribosomal subunit protein bL19 (Methylorubrum extorquens (strain PA1) (Methylobacterium extorquens)).